We begin with the raw amino-acid sequence, 258 residues long: Short-chain dehydrogenase/reductase olcF (258 aa).

The NADP(+) site is built by Val12, Asp58, and Arg120. The active-site Proton donor is the Ser138. NADP(+) is bound by residues Tyr152, Lys156, and Val185. Tyr152 serves as the catalytic Proton acceptor. Lys156 serves as the catalytic Lowers pKa of active site Tyr.

This sequence belongs to the short-chain dehydrogenases/reductases (SDR) family.

Its pathway is secondary metabolite biosynthesis; terpenoid biosynthesis. Functionally, short-chain dehydrogenase/reductase; part of the gene cluster that mediates the biosynthesis of 15-deoxyoxalicine B. The first step of the pathway is the synthesis of nicotinyl-CoA from nicotinic acid by the nicotinic acid-CoA ligase olcI. Nicotinyl-CoA is then a substrate of polyketide synthase olcA to produce 4-hydroxy-6-(3-pyridinyl)-2H-pyran-2-one (HPPO) which is further prenylated by the polyprenyl transferase olcH to yield geranylgeranyl-HPPO. Geranylgeranyl pyrophosphate is provided by the cluster-specific geranylgeranyl pyrophosphate synthase olcC. The FAD-dependent monooxygenase olcE catalyzes the epoxidation of geranylgeranyl-HPPO and the terpene cyclase olcD catalyzes the cyclization of the terpenoid component, resulting in the formation of the tricyclic terpene moiety seen in predecaturin E. The cytochrome P450 monooxygenase then catalyzes the allylic oxidation of predecaturin E, which is followed by spirocylization with concomitant loss of one molecule of water to form decaturin E. Decaturin E is the substrate of the cytochrome P450 monooxygenase olcJ which hydroxylates it at the C-29 position to form decaturin F. The short-chain dehydrogenase/reductase olcF may catalyze the oxidation of decaturin F to generate the 29-hydroxyl-27-one intermediate, and subsequent hemiacetal formation probably leads to the formation of decaturin C. The dioxygenase olcK may be a peroxisomal enzyme that catalyzes the hydroxylation of decaturin C into decaturin A once decaturin C is shuttled into the peroxisome by the MFS transporter olcL. Finally the cytochrome P450 monooxygenase olcB catalyzes the oxidative rearrangement to yield 15-deoxyoxalicine B. In the absence of olcJ, decaturin E may be shunted to a pathway in which it is oxidized to a ketone, possibly by olcF, to form decaturin D, which undergoes further allylic oxidation to yield decaturin G. Moreover, in the absence of oclK or oclL, oclB can convert decaturin C into 15-deoxyoxalicine A. In Penicillium canescens, this protein is Short-chain dehydrogenase/reductase olcF.